The primary structure comprises 427 residues: Riboflavin transporter rft-1 (427 aa).

At 1–2 (MK) the chain is on the cytoplasmic side. The chain crosses the membrane as a helical span at residues 3–23 (TFLFTFCLVAIFGSSSWIGTN). Topologically, residues 24-42 (SVWMELSLLTAKLPEGWNL) are extracellular. The chain crosses the membrane as a helical span at residues 43–63 (PSYLSAIVQIACLGPLIYSII). Residues 64–73 (HKGIKMTIPT) are Cytoplasmic-facing. The chain crosses the membrane as a helical span at residues 74–94 (VPLIFIFMVLACICQLGLCFF). Residues 95–111 (WDDTGYIFGAIRSWPLY) are Extracellular-facing. Residues 112 to 132 (LLLFGLAIVDAISSVLFLPFM) traverse the membrane as a helical segment. At 133 to 139 (AQFHPSF) the chain is on the cytoplasmic side. A helical transmembrane segment spans residues 140–160 (LNAYFVGMGLSALIPSLLSLI). The Extracellular segment spans residues 161 to 184 (QGTSNYWCDDNKTPHYYPPRFSVS). Residues 185–205 (MFFLINFFFTCAAVAAFLVLY) form a helical membrane-spanning segment. Topologically, residues 206–261 (KIGAHKNSSQVEPEPKHSIQIIQGDSTTDVNEVNTESSFQETSSIPDSSSATGARL) are cytoplasmic. Residues 262 to 282 (AFLLLTTALVNAQMNGIVTSV) traverse the membrane as a helical segment. The Extracellular segment spans residues 283 to 297 (QSYATLVYSQNTYHY). The chain crosses the membrane as a helical span at residues 298–318 (AVTLSNVISPLASYLQFFVKI). Topologically, residues 319 to 322 (RSLP) are cytoplasmic. A helical membrane pass occupies residues 323–343 (ILAFLTLCSSLTTAVIIYLAA). At 344–353 (LSPNWIFNSE) the chain is on the extracellular side. Residues 354-374 (TAGTIISIASSLIAAGLHSYL) traverse the membrane as a helical segment. At 375 to 391 (RVMFAALLREGNQKESR) the chain is on the cytoplasmic side. A helical membrane pass occupies residues 392–412 (LFWCGAFIQIGSFTGSAIMFP). The Extracellular segment spans residues 413–427 (LVNVWKLFHSAPSCR).

This sequence belongs to the riboflavin transporter family. As to expression, expressed in intestine.

Its subcellular location is the cell membrane. It catalyses the reaction riboflavin(in) = riboflavin(out). Activity is strongly inhibited by riboflavin analogs, such as lumiflavin and lumichrome. Functionally, riboflavin transporter. Riboflavin transport is Na(+)-independent but pH-sensitive. The chain is Riboflavin transporter rft-1 from Caenorhabditis elegans.